The following is a 414-amino-acid chain: S-adenosylmethionine synthase (414 aa).

His-11 serves as a coordination point for ATP. Asp-13 is a Mg(2+) binding site. Glu-39 contributes to the K(+) binding site. The L-methionine site is built by Glu-52 and Gln-95. The interval 95–105 is flexible loop; that stretch reads QSPDIAQGVNM. ATP is bound by residues 169 to 171, 245 to 246, Asp-254, 260 to 261, Ala-277, and Lys-281; these read DGK, KF, and RK. Residue Asp-254 coordinates L-methionine. Residue Lys-285 coordinates L-methionine.

Belongs to the AdoMet synthase family. As to quaternary structure, homotetramer; dimer of dimers. It depends on Mg(2+) as a cofactor. Requires K(+) as cofactor.

It localises to the cytoplasm. It carries out the reaction L-methionine + ATP + H2O = S-adenosyl-L-methionine + phosphate + diphosphate. Its pathway is amino-acid biosynthesis; S-adenosyl-L-methionine biosynthesis; S-adenosyl-L-methionine from L-methionine: step 1/1. In terms of biological role, catalyzes the formation of S-adenosylmethionine (AdoMet) from methionine and ATP. The overall synthetic reaction is composed of two sequential steps, AdoMet formation and the subsequent tripolyphosphate hydrolysis which occurs prior to release of AdoMet from the enzyme. The polypeptide is S-adenosylmethionine synthase (Synechococcus sp. (strain JA-2-3B'a(2-13)) (Cyanobacteria bacterium Yellowstone B-Prime)).